The following is a 328-amino-acid chain: NNLPSHSEVIQLYKSRNIGRLRLYDPNHGALNALRGSNIEVILGLPNVDVKHIASGMEHARWWVQKNVKDFWPDVKIKYIAVGNEISPVTGTSSLTSFQVPALVNIYKAIGEAGLGNDIKVSTSVDMTLIGNSYPPSQGSFRNDVRWFTDPIVGFLRDTRAPLLVNIYPYFSYSGNPGQISLPYALFTAPNVVVQDGSRQYRNLFDAMLDSVYAAMERTGGGSVGIVVSESGWPSAGAFGATQDNAATYLRNLIQHAKEGSPRKPGPIETYIFAMFDENNKNPELEKHFGLFSPNKQPKYNLNFGVSERVWDISAETNSTTSSLISEM.

Glutamate 85 acts as the Proton donor in catalysis. Glutamate 230 (nucleophile) is an active-site residue. Residues valine 306–methionine 328 constitute a propeptide, removed in mature form. N-linked (GlcNAc...) asparagine glycosylation is present at asparagine 318.

This sequence belongs to the glycosyl hydrolase 17 family.

The protein resides in the vacuole. The catalysed reaction is Hydrolysis of (1-&gt;3)-beta-D-glucosidic linkages in (1-&gt;3)-beta-D-glucans.. Functionally, is thought to be an important plant defense-related product against fungal pathogens. This is Glucan endo-1,3-beta-glucosidase, basic isoform 3 (GLUB3) from Solanum tuberosum (Potato).